A 930-amino-acid polypeptide reads, in one-letter code: Pyruvate dehydrogenase E1 component (930 aa).

A compositionally biased stretch (basic and acidic residues) spans 1-10; that stretch reads MTTDFARHDL. Residues 1-21 form a disordered region; the sequence is MTTDFARHDLAQNSNSASEPD. Residue Lys-375 forms an Isoglutamyl lysine isopeptide (Lys-Gln) (interchain with Q-Cter in protein Pup) linkage.

Homodimer. Part of the PDH complex, consisting of multiple copies of AceE (E1), DlaT (E2) and Lpd (E3). The cofactor is Mg(2+). It depends on thiamine diphosphate as a cofactor.

It catalyses the reaction N(6)-[(R)-lipoyl]-L-lysyl-[protein] + pyruvate + H(+) = N(6)-[(R)-S(8)-acetyldihydrolipoyl]-L-lysyl-[protein] + CO2. Component of the pyruvate dehydrogenase (PDH) complex, that catalyzes the overall conversion of pyruvate to acetyl-CoA and CO(2). AceE has reductase activity with pyruvate but does not react with 2-oxoglutarate. This chain is Pyruvate dehydrogenase E1 component (aceE), found in Mycobacterium tuberculosis (strain ATCC 25618 / H37Rv).